The primary structure comprises 532 residues: Phosphoenolpyruvate carboxykinase (ATP) (532 aa).

Arg-60, Tyr-195, and Lys-201 together coordinate substrate. Residues Lys-201, His-221, and 237–245 (GLSGTGKTT) contribute to the ATP site. Mn(2+) contacts are provided by Lys-201 and His-221. Asp-258 serves as a coordination point for Mn(2+). The ATP site is built by Glu-287, Arg-323, and Thr-448. Substrate is bound at residue Arg-323.

It belongs to the phosphoenolpyruvate carboxykinase (ATP) family. Mn(2+) is required as a cofactor.

It localises to the cytoplasm. It carries out the reaction oxaloacetate + ATP = phosphoenolpyruvate + ADP + CO2. It functions in the pathway carbohydrate biosynthesis; gluconeogenesis. Functionally, involved in the gluconeogenesis. Catalyzes the conversion of oxaloacetate (OAA) to phosphoenolpyruvate (PEP) through direct phosphoryl transfer between the nucleoside triphosphate and OAA. This chain is Phosphoenolpyruvate carboxykinase (ATP), found in Christiangramia forsetii (strain DSM 17595 / CGMCC 1.15422 / KT0803) (Gramella forsetii).